A 900-amino-acid polypeptide reads, in one-letter code: Probable beta-mannosidase (900 aa).

The signal sequence occupies residues 1-21 (MRTSLVVCLFWLLFQLHTTHG). N-linked (GlcNAc...) asparagine glycosylation is found at Asn-38, Asn-42, and Asn-131. The active-site Proton donor is the Glu-463. Residues Asn-477, Asn-576, Asn-661, and Asn-738 are each glycosylated (N-linked (GlcNAc...) asparagine).

Belongs to the glycosyl hydrolase 2 family.

It is found in the lysosome. The enzyme catalyses Hydrolysis of terminal, non-reducing beta-D-mannose residues in beta-D-mannosides.. The protein is Probable beta-mannosidase of Caenorhabditis elegans.